Consider the following 157-residue polypeptide: Cysteine protease Nivulian-2 (157 aa).

It belongs to the intron maturase 2 family. MatK subfamily. Monomer. In terms of processing, glycosylated. As to expression, accumulates in latex (at protein level).

Inhibited by HgCl(2), iodoacetamide (IAA) and, to a far lesser extent, by SDS, hydrogen peroxide H(1)O(2), KCl, NaCl, ZnCl(2), AgSO(4), CdCl(2), FeCl(3), PMSF, Pepstatin A and EDTA. Repressed moderately by many organic solvents such as diethyl ether, ethy lacetate, acetophenone, butanol, trichloroethylene, tetrahydrofuran, methanol, chloroform and dichloromethane, and, to a lesser extent, by propanol, benzyl alcohol and chlorobenzene. In terms of biological role, cysteine protease inducing milk clotting by cleaving casein. Exhibits biomedical activities such as wound healing, haemostatic and antibacterial activity, as well as agricultural application in biocontrol process against the infectious management of the root knot nematode Meloidogyne incognita. The chain is Cysteine protease Nivulian-2 from Euphorbia nivulia (Leafy milk hedge).